Reading from the N-terminus, the 894-residue chain is Eukaryotic translation initiation factor 3 subunit C (894 aa).

2 disordered regions span residues methionine 1–lysine 28 and serine 162–methionine 235. 3 stretches are compositionally biased toward acidic residues: residues serine 12–glutamate 22, aspartate 169–proline 189, and serine 203–serine 214. The span at phenylalanine 215–asparagine 224 shows a compositional bias: polar residues. One can recognise a PCI domain in the interval tyrosine 625–proline 801. A disordered region spans residues glutamine 824–phenylalanine 894. Residues arginine 845–lysine 854 are compositionally biased toward basic and acidic residues. Gly residues predominate over residues glycine 855–proline 870. Over residues glutamine 884–phenylalanine 894 the composition is skewed to basic residues.

It belongs to the eIF-3 subunit C family. In terms of assembly, component of the eukaryotic translation initiation factor 3 (eIF-3) complex.

It localises to the cytoplasm. Functionally, component of the eukaryotic translation initiation factor 3 (eIF-3) complex, which is involved in protein synthesis of a specialized repertoire of mRNAs and, together with other initiation factors, stimulates binding of mRNA and methionyl-tRNAi to the 40S ribosome. The eIF-3 complex specifically targets and initiates translation of a subset of mRNAs involved in cell proliferation. The protein is Eukaryotic translation initiation factor 3 subunit C of Caenorhabditis briggsae.